We begin with the raw amino-acid sequence, 451 residues long: D(1A) dopamine receptor (451 aa).

At 1–22 (MTFNITSMDEDVLLTERESSFR) the chain is on the extracellular side. N4 carries N-linked (GlcNAc...) asparagine glycosylation. The chain crosses the membrane as a helical span at residues 23–48 (VLTGCFLSVLILSTLLGNTLVCAAVI). Over 49 to 59 (RFRHLRSKVTN) the chain is Cytoplasmic. The chain crosses the membrane as a helical span at residues 60 to 86 (FFVISLAVSDLLVAVLVMPWKAVAEIA). Residues 87-95 (GFWPFGTFC) lie on the Extracellular side of the membrane. Cysteines 95 and 185 form a disulfide. Residues 96-118 (NIWVAFDIMCSTASILNLCVISV) form a helical membrane-spanning segment. Topologically, residues 119–137 (DRYWAISSPFRYERKMTPK) are cytoplasmic. Residues 138–162 (VAFIMIGVAWTLSVLISFIPVQLNW) form a helical membrane-spanning segment. Topologically, residues 163–191 (HKAKTTSFFDLNITLHDRTMDNCDSSLNR) are extracellular. A helical membrane pass occupies residues 192–217 (TYAISSSLISFYIPVAIMIVTYTRIY). The Cytoplasmic segment spans residues 218-271 (RIAAKQIRRISALERAAVHAKNCQNSTSNRNSLDCQQPESSLKTSFKRETKVLK). A helical transmembrane segment spans residues 272–298 (TLSVIMGVFVCCWLPFFILNCIVPFCD). At 299–315 (PSLTTSGTEPFCISSTT) the chain is on the extracellular side. The chain crosses the membrane as a helical span at residues 316-340 (FDVFVWFGWANSSLNPIIYAFNADF). Topologically, residues 341–451 (RKAFSNLLGC…PITQNGQPKT (111 aa)) are cytoplasmic. Residue C350 is the site of S-palmitoyl cysteine attachment.

This sequence belongs to the G-protein coupled receptor 1 family. In terms of tissue distribution, brain.

The protein localises to the cell membrane. Its subcellular location is the cell projection. It localises to the cilium membrane. In terms of biological role, dopamine receptor whose activity is mediated by G proteins which activate adenylyl cyclase. This Xenopus laevis (African clawed frog) protein is D(1A) dopamine receptor (drd1).